We begin with the raw amino-acid sequence, 637 residues long: Biosynthetic arginine decarboxylase (637 aa).

Lys107 carries the post-translational modification N6-(pyridoxal phosphate)lysine. 289-299 (LDVGGGLGVDY) is a substrate binding site.

Belongs to the Orn/Lys/Arg decarboxylase class-II family. SpeA subfamily. The cofactor is Mg(2+). It depends on pyridoxal 5'-phosphate as a cofactor.

The enzyme catalyses L-arginine + H(+) = agmatine + CO2. In terms of biological role, catalyzes the biosynthesis of agmatine from arginine. This Thermosynechococcus vestitus (strain NIES-2133 / IAM M-273 / BP-1) protein is Biosynthetic arginine decarboxylase.